The primary structure comprises 275 residues: COP9 signalosome complex subunit 7a (275 aa).

Ser2 carries the post-translational modification N-acetylserine. The PCI domain maps to 2–159; sequence SAEVKVTGQN…QRLEVDYSIG (158 aa). The stretch at 185-233 forms a coiled coil; that stretch reads LSGIEEQVSRANQHKEQQLGLKQQIESEVANLKKTIKVTTAAAAAATSQ. The segment at 228-275 is disordered; the sequence is AAATSQDPEQHLTELREPASGTNQRQPSKKASKGKGLRGSAKIWSKSN. Positions 235–244 are enriched in basic and acidic residues; sequence PEQHLTELRE. The segment covering 254–263 has biased composition (basic residues); the sequence is PSKKASKGKG.

It belongs to the CSN7/EIF3M family. CSN7 subfamily. In terms of assembly, component of the CSN complex, composed of COPS1/GPS1, COPS2, COPS3, COPS4, COPS5, COPS6, COPS7 (COPS7A or COPS7B), COPS8 and COPS9. In the complex, it probably interacts directly with COPS1, COPS2, COPS4, COPS5, COPS6 and COPS8. Interacts with PMF1. Interacts with the translation initiation factor EIF3S6. Interacts with CK2 and PKD. Interacts directly with ID3. Phosphorylated by CK2 and PKD kinases.

The protein localises to the cytoplasm. It is found in the nucleus. Its function is as follows. Component of the COP9 signalosome complex (CSN), a complex involved in various cellular and developmental processes. The CSN complex is an essential regulator of the ubiquitin (Ubl) conjugation pathway by mediating the deneddylation of the cullin subunits of SCF-type E3 ligase complexes, leading to decrease the Ubl ligase activity of SCF-type complexes such as SCF, CSA or DDB2. The complex is also involved in phosphorylation of p53/TP53, JUN, I-kappa-B-alpha/NFKBIA, ITPK1 and IRF8/ICSBP, possibly via its association with CK2 and PKD kinases. CSN-dependent phosphorylation of TP53 and JUN promotes and protects degradation by the Ubl system, respectively. This chain is COP9 signalosome complex subunit 7a (Cops7a), found in Mus musculus (Mouse).